Reading from the N-terminus, the 310-residue chain is Phosphoribosylaminoimidazole-succinocarboxamide synthase (310 aa).

It belongs to the SAICAR synthetase family.

The enzyme catalyses 5-amino-1-(5-phospho-D-ribosyl)imidazole-4-carboxylate + L-aspartate + ATP = (2S)-2-[5-amino-1-(5-phospho-beta-D-ribosyl)imidazole-4-carboxamido]succinate + ADP + phosphate + 2 H(+). Its pathway is purine metabolism; IMP biosynthesis via de novo pathway; 5-amino-1-(5-phospho-D-ribosyl)imidazole-4-carboxamide from 5-amino-1-(5-phospho-D-ribosyl)imidazole-4-carboxylate: step 1/2. This chain is Phosphoribosylaminoimidazole-succinocarboxamide synthase, found in Stenotrophomonas maltophilia (strain K279a).